A 182-amino-acid polypeptide reads, in one-letter code: Peptidoglycan recognition protein 1 (182 aa).

Residues 1–18 (MLFACALLALLGLATSCS) form the signal peptide. Cystine bridges form between Cys17-Cys141, Cys33-Cys78, and Cys54-Cys60. An N-acetylmuramoyl-L-alanine amidase domain is found at 39–167 (HPVRYVVISH…RDVQSTLSPG (129 aa)).

This sequence belongs to the N-acetylmuramoyl-L-alanine amidase 2 family. In terms of assembly, homodimer; disulfide-linked. Interacts with HSPA1A; this interaction forms a cytotoxic complex that is released by lymphokine-activated killer cells. Interacts with HSPBP1; this interaction blocks the cytotoxic activity of the PGLYRP1-HSPA1A complex. In terms of tissue distribution, strongly expressed in spleen and lung. Also detected in brain and thymus. In the lung, expressed in the intraalveolar space, in the brain, expressed in the Purkinje cells of the cerebellum and in certain layers of neurons in the hippocampus. Also detected in cells filling the space within the intestinal villus.

Its subcellular location is the cytoplasm. The protein resides in the secreted. Functionally, innate immunity protein that plays several important functions in antimicrobial and antitumor defense systems. Acts as a pattern receptor that binds to murein peptidoglycans (PGN) of Gram-positive bacteria and thus provides bactericidal activity. Forms an equimolar complex with heat shock protein HSPA1A and induces programmed cell death through apoptosis and necroptosis in tumor cell lines by activating the TNFR1 receptor on the target cell membrane. In addition, acts in complex with the Ca(2+)-binding protein S100A4 as a chemoattractant able to induce lymphocyte movement. Mechanistically, this complex acts as a ligand of the chemotactic receptors CCR5 and CXCR3 which are present on the cells of the immune system. Also promotes the activation of lymphocytes that become able to kill virus-infected cells as well as tumor cells by modulating the spectrum of their target-cell specificity. Induction of cytotoxicity on monocyte surface requires interaction with TREM1 receptor. The polypeptide is Peptidoglycan recognition protein 1 (Pglyrp1) (Mus musculus (Mouse)).